The following is an 80-amino-acid chain: Dolichol-phosphate mannose synthase subunit 2 (80 aa).

2 consecutive transmembrane segments (helical) span residues 10-30 (LLLSSISLSIFTYYTFWVIIL) and 50-70 (ILVPVFAGIALLSLISVFIGM).

This sequence belongs to the DPM2 family. Component of the dolichol-phosphate mannose (DPM) synthase complex composed of DPMS1, DPMS2 and DPMS3; in the complex interacts directly with DPMS3. Associates with the GPI-GlcNAc transferase (GPI-GnT) complex.

Its subcellular location is the endoplasmic reticulum membrane. The protein operates within protein modification; protein glycosylation. In terms of biological role, regulates the biosynthesis of dolichol phosphate-mannose. Regulatory subunit of the dolichol-phosphate mannose (DPM) synthase complex; essential for the ER localization and stable expression of DPMS1. The sequence is that of Dolichol-phosphate mannose synthase subunit 2 from Arabidopsis thaliana (Mouse-ear cress).